An 888-amino-acid chain; its full sequence is Glutamate receptor 3 (888 aa).

An N-terminal signal peptide occupies residues 1 to 22 (MGQSVLRAVFFLVLGLLGHSHG). Over 23–546 (GFPNTISIGG…GVFSFLDPLA (524 aa)) the chain is Extracellular. Residues N57, N260, N374, N409, and N416 are each glycosylated (N-linked (GlcNAc...) asparagine). The cysteines at positions 85 and 334 are disulfide-linked. The L-glutamate site is built by P502, T504, and R509. The helical transmembrane segment at 547-567 (YEIWMCIVFAYIGVSVVLFLV) threads the bilayer. Residues 568-596 (SRFSPYEWHLEDNNEEPRDPQSPPDPPNE) are Cytoplasmic-facing. Residues 597 to 612 (FGIFNSLWFSLGAFMQ) constitute an intramembrane region (helical; Pore-forming). Residues 613 to 615 (QGC) lie within the membrane without spanning it. Residue C615 is the site of S-palmitoyl cysteine attachment. The Cytoplasmic segment spans residues 616-621 (DISPRS). The chain crosses the membrane as a helical span at residues 622-642 (LSGRIVGGVWWFFTLIIISSY). The Extracellular portion of the chain corresponds to 643–817 (TANLAAFLTV…DKTSALSLSN (175 aa)). The L-glutamate site is built by S680, T681, and E731. Residues C744 and C799 are joined by a disulfide bond. The helical transmembrane segment at 818–838 (VAGVFYILVGGLGLAMMVALI) threads the bilayer. Residues 839–888 (EFCYKSRAESKRMKLTKNTQNFKPAPATNTQNYATYREGYNVYGTESVKI) are Cytoplasmic-facing. C841 is lipidated: S-palmitoyl cysteine. Phosphotyrosine is present on residues Y871 and Y881.

Belongs to the glutamate-gated ion channel (TC 1.A.10.1) family. GRIA3 subfamily. As to quaternary structure, homotetramer or heterotetramer of pore-forming glutamate receptor subunits. Tetramers may be formed by the dimerization of dimers. Interacts with PICK1, GRIP1 and GRIP2. Found in a complex with GRIA1, GRIA2, GRIA4, CNIH2, CNIH3, CACNG2, CACNG3, CACNG4, CACNG5, CACNG7 and CACNG8. Interacts with CACNG5. Found in a complex with GRIA1, GRIA2, GRIA4, DLG4, CACNG8 and CNIH2.

The protein resides in the cell membrane. It localises to the postsynaptic cell membrane. The protein localises to the postsynaptic density membrane. It carries out the reaction Ca(2+)(in) = Ca(2+)(out). Ionotropic glutamate receptor that functions as a ligand-gated cation channel, gated by L-glutamate and glutamatergic agonists such as alpha-amino-3-hydroxy-5-methyl-4-isoxazolepropionic acid (AMPA), quisqualic acid, and kainic acid. L-glutamate acts as an excitatory neurotransmitter at many synapses in the central nervous system and plays an important role in fast excitatory synaptic transmission by inducing long-term potentiation. Binding of the excitatory neurotransmitter L-glutamate induces a conformation change, leading to the opening of the cation channel, and thereby converts the chemical signal to an electrical impulse upon entry of calcium. The receptor then desensitizes rapidly and enters a transient inactive state, characterized by the presence of bound agonist. In the presence of CACNG8, shows resensitization which is characterized by a delayed accumulation of current flux upon continued application of glutamate. This chain is Glutamate receptor 3, found in Mus musculus (Mouse).